A 470-amino-acid chain; its full sequence is Tigger transposable element-derived protein 3 (470 aa).

The 53-residue stretch at 3–55 folds into the HTH psq-type domain; sequence LNTKKKLHALSLAEKIQVLELLDESKMSQSEVARRFQVSQPQISRICKNKEKL. 2 consecutive DNA-binding regions (H-T-H motif) follow at residues 31-51 and 100-130; these read QSEVARRFQVSQPQISRICKN and PMLLHKAKELADIMGQDFVPSIGWLVRWKRR. The 71-residue stretch at 67–137 folds into the HTH CENPB-type domain; that stretch reads ERKRKRESKY…KRRNNVGFGT (71 aa). Residues 167–360 form the DDE-1 domain; sequence FSPEDVFGCA…VPRQLILSSF (194 aa). Positions 402–421 are enriched in basic and acidic residues; that stretch reads DPGPRVCKEETGTEDSGREE. A disordered region spans residues 402 to 426; that stretch reads DPGPRVCKEETGTEDSGREEDGFEP.

Belongs to the tigger transposable element derived protein family.

The protein localises to the nucleus. The chain is Tigger transposable element-derived protein 3 (Tigd3) from Mus musculus (Mouse).